We begin with the raw amino-acid sequence, 260 residues long: Adenosylcobinamide-GDP ribazoletransferase (260 aa).

8 consecutive transmembrane segments (helical) span residues alanine 3–tryptophan 23, phenylalanine 36–isoleucine 56, tryptophan 60–leucine 80, valine 108–leucine 128, leucine 133–methionine 153, alanine 180–valine 200, methionine 206–leucine 226, and glycine 239–alanine 259.

It belongs to the CobS family. Requires Mg(2+) as cofactor.

The protein localises to the cell inner membrane. The enzyme catalyses alpha-ribazole + adenosylcob(III)inamide-GDP = adenosylcob(III)alamin + GMP + H(+). It carries out the reaction alpha-ribazole 5'-phosphate + adenosylcob(III)inamide-GDP = adenosylcob(III)alamin 5'-phosphate + GMP + H(+). It participates in cofactor biosynthesis; adenosylcobalamin biosynthesis; adenosylcobalamin from cob(II)yrinate a,c-diamide: step 7/7. Functionally, joins adenosylcobinamide-GDP and alpha-ribazole to generate adenosylcobalamin (Ado-cobalamin). Also synthesizes adenosylcobalamin 5'-phosphate from adenosylcobinamide-GDP and alpha-ribazole 5'-phosphate. The protein is Adenosylcobinamide-GDP ribazoletransferase of Prochlorococcus marinus (strain MIT 9313).